The chain runs to 467 residues: Cytochrome P450 85A3 (467 aa).

The chain crosses the membrane as a helical span at residues Ala-2–Phe-22. Cys-417 serves as a coordination point for heme.

It belongs to the cytochrome P450 family. It depends on heme as a cofactor. In terms of tissue distribution, expressed in fruits.

It localises to the membrane. It carries out the reaction 6-deoxocastasterone + reduced [NADPH--hemoprotein reductase] + O2 = 6alpha-hydroxycastasterone + oxidized [NADPH--hemoprotein reductase] + H2O + H(+). The catalysed reaction is 6alpha-hydroxycastasterone + reduced [NADPH--hemoprotein reductase] + O2 = castasterone + oxidized [NADPH--hemoprotein reductase] + 2 H2O + H(+). It catalyses the reaction castasterone + reduced [NADPH--hemoprotein reductase] + O2 = brassinolide + oxidized [NADPH--hemoprotein reductase] + H2O + H(+). The enzyme catalyses 6-deoxocastasterone + 2 reduced [NADPH--hemoprotein reductase] + 2 O2 = castasterone + 2 oxidized [NADPH--hemoprotein reductase] + 3 H2O + 2 H(+). It participates in plant hormone biosynthesis; brassinosteroid biosynthesis. In terms of biological role, catalyzes the C6-oxidation step in brassinosteroids biosynthesis. Converts 6-deoxocastasterone (6-deoxoCS) to castasterone (CS), and castasterone (CS) to brassinolide (BL). The sequence is that of Cytochrome P450 85A3 from Solanum lycopersicum (Tomato).